We begin with the raw amino-acid sequence, 352 residues long: Inner membrane protein YeeA (352 aa).

Residues 1–25 (MRADKSLSPFEIRVYRHYRIVHGTR) lie on the Cytoplasmic side of the membrane. The next 2 helical transmembrane spans lie at 26 to 46 (VALA…PEST) and 47 to 67 (WPLV…NVVP). Residue R68 is a topological domain, cytoplasmic. The chain crosses the membrane as a helical span at residues 69–89 (AFERIGGTVLGSILGLIALQL). Position 90 (E90) is a topological domain, periplasmic. Residues 91 to 111 (LISLPLMLVWCAAAMFLCGWL) traverse the membrane as a helical segment. Residues 112 to 117 (ALGKKP) are Cytoplasmic-facing. The helical transmembrane segment at 118 to 138 (YQGLLIGVTLAIVVGSPTGEI) threads the bilayer. Over 139–147 (DTALWRSGD) the chain is Periplasmic. The chain crosses the membrane as a helical span at residues 148–168 (VILGSLLAMLFTGIWPQRAFI). At 169–352 (HWRIQLAKSL…SNLICRALRK (184 aa)) the chain is on the cytoplasmic side.

The protein resides in the cell inner membrane. This Escherichia coli (strain K12) protein is Inner membrane protein YeeA (yeeA).